The chain runs to 245 residues: Dehydrogenase/reductase SDR family member 6 (245 aa).

NAD(+) contacts are provided by residues 16-18, D37, and D58; that span reads QGI. R144 provides a ligand contact to substrate. Y147 acts as the Proton acceptor in catalysis. NAD(+)-binding positions include K151 and 180–184; that span reads VDTPS. Substrate contacts are provided by R188 and R205.

The protein belongs to the short-chain dehydrogenases/reductases (SDR) family. In terms of assembly, homotetramer. Detected in liver (at protein level).

It is found in the cytoplasm. The catalysed reaction is cis-4-hydroxy-L-proline + NAD(+) = 4-oxo-L-proline + NADH + H(+). It carries out the reaction (R)-3-hydroxybutanoate + NAD(+) = acetoacetate + NADH + H(+). The protein operates within amino-acid metabolism. Its pathway is siderophore biosynthesis. NAD(H)-dependent dehydrogenase/reductase with a preference for cyclic substrates. Catalyzes stereoselective conversion of 4-oxo-L-proline to cis-4-hydroxy-L-proline, likely a detoxification mechanism for ketoprolines. Mediates the formation of 2,5-dihydroxybenzoate (2,5-DHBA), a siderophore that chelates free cytoplasmic iron and associates with LCN2, thereby regulating iron transport and homeostasis while protecting cells against free radical-induced oxidative stress. The iron-siderophore complex is imported into mitochondria, providing an iron source for mitochondrial metabolic processes in particular heme synthesis. May act as a 3-hydroxybutyrate dehydrogenase. The chain is Dehydrogenase/reductase SDR family member 6 from Homo sapiens (Human).